We begin with the raw amino-acid sequence, 316 residues long: Biotin synthase (316 aa).

The region spanning 38–266 (YKGKKIELCA…DKDIRVCGGR (229 aa)) is the Radical SAM core domain. [4Fe-4S] cluster-binding residues include Cys56, Cys60, and Cys63. Positions 100, 131, 191, and 261 each coordinate [2Fe-2S] cluster.

Belongs to the radical SAM superfamily. Biotin synthase family. As to quaternary structure, homodimer. It depends on [4Fe-4S] cluster as a cofactor. Requires [2Fe-2S] cluster as cofactor.

It catalyses the reaction (4R,5S)-dethiobiotin + (sulfur carrier)-SH + 2 reduced [2Fe-2S]-[ferredoxin] + 2 S-adenosyl-L-methionine = (sulfur carrier)-H + biotin + 2 5'-deoxyadenosine + 2 L-methionine + 2 oxidized [2Fe-2S]-[ferredoxin]. It functions in the pathway cofactor biosynthesis; biotin biosynthesis; biotin from 7,8-diaminononanoate: step 2/2. In terms of biological role, catalyzes the conversion of dethiobiotin (DTB) to biotin by the insertion of a sulfur atom into dethiobiotin via a radical-based mechanism. In Thermodesulfovibrio yellowstonii (strain ATCC 51303 / DSM 11347 / YP87), this protein is Biotin synthase.